Consider the following 125-residue polypeptide: Prefoldin subunit beta (125 aa).

The protein belongs to the prefoldin subunit beta family. In terms of assembly, heterohexamer of two alpha and four beta subunits.

The protein localises to the cytoplasm. Molecular chaperone capable of stabilizing a range of proteins. Seems to fulfill an ATP-independent, HSP70-like function in archaeal de novo protein folding. The polypeptide is Prefoldin subunit beta (Pyrobaculum islandicum (strain DSM 4184 / JCM 9189 / GEO3)).